The primary structure comprises 329 residues: Cysteine synthase (329 aa).

The residue at position 48 (K48) is an N6-(pyridoxal phosphate)lysine. Pyridoxal 5'-phosphate is bound by residues N78, 183–187 (GTGGT), and S278.

It belongs to the cysteine synthase/cystathionine beta-synthase family. In terms of assembly, homodimer. Requires pyridoxal 5'-phosphate as cofactor.

It carries out the reaction O-acetyl-L-serine + hydrogen sulfide = L-cysteine + acetate. The protein operates within amino-acid biosynthesis; L-cysteine biosynthesis; L-cysteine from L-serine: step 2/2. Functionally, catalyzes the conversion of O-acetylserine (OAS) to cysteine through the elimination of acetate and addition of hydrogen sulfide. The polypeptide is Cysteine synthase (srpG) (Synechococcus elongatus (strain ATCC 33912 / PCC 7942 / FACHB-805) (Anacystis nidulans R2)).